We begin with the raw amino-acid sequence, 614 residues long: Baeyer-Villiger monooxygenase peniC (614 aa).

FAD-binding positions include Glu99, 107-110 (TWHW), Asp119, and Tyr125. NADP(+) contacts are provided by residues 255 to 261 (TGASGVQ), 278 to 279 (RT), and 398 to 399 (KR).

The protein belongs to the FAD-binding monooxygenase family. FAD is required as a cofactor.

The enzyme catalyses gamma-lactone-2-keto[5.5.5.5]fenestrane + NADPH + O2 + H(+) = penifulvin A + NADP(+) + H2O. It functions in the pathway secondary metabolite biosynthesis; terpenoid biosynthesis. Functionally, baeyer-Villiger monooxygenase; part of the gene cluster that mediates the biosynthesis of penifulvin A, a potent insecticidal sesquiterpene that features a [5.5.5.6]dioxafenestrane ring. Within the pathway, peniC is responsible for the final regioselective Baeyer-Villiger oxidation of gamma-lactone-2-keto[5.5.5.5]fenestran between C1 and C2 to form the delta-lactone moiety of penifulvin A. The first step of the pathway is performed by the sesquiterpene cyclase peniA that generates the angular triquinane scaffold silphinene via cyclization of the linear farnesyl pyrophosphate (FPP). The cytochrome P450 monooxygenase peniB and the flavin-dependent monooxygenase peniC then catalyze a series of oxidation reactions to transform silphinene into penifulvin A. This is Baeyer-Villiger monooxygenase peniC from Penicillium patulum (Penicillium griseofulvum).